Consider the following 461-residue polypeptide: pre-mRNA splicing regulator USH1G (461 aa).

ANK repeat units lie at residues 31–60 (DGMT…DPDK), 64–93 (WGNT…NIWC), and 97–126 (DYHT…KQSS). A disordered region spans residues 329-368 (LGREDGGLDGAGTPRGRLHSSPSLDDDSLGSANSLQDRSC). An SAM domain is found at 385-447 (LEPETSPLET…KILGAVRRRR (63 aa)). Ser-422 bears the Phosphoserine mark.

As to quaternary structure, part of a complex composed of USH1C, USH1G and MYO7A. Interacts with USH1C (via the first PDZ domain). Interacts with PDZD7. Interacts with CDH23 and PCDH15; these interactions may recruit USH1G to the plasma membrane. Interacts with intraflagellar transport proteins IFT20, IFT52 and IFT57. Interacts with splicing factors SF3B1, PRPF6, PRPF31 and SON. Interacts with the U4/U6.U5 tri-small nuclear ribonucleoprotein (tri-snRNP) complex in the presence of pre-mRNAs. Interacts (via SAM domain) with MAGI2 (via PDZ 6 domain); the interaction is triggered by phosphorylation of USH1G by CK2 and negatively regulates MAGI2-mediated endocytosis. In terms of tissue distribution, detected in stereocilia from cochlear hair cells (at protein level). Detected in retinal photoreceptor cell cilia (at protein level). Highly expressed in the cochlea, testis, cerebellum and eye, and low levels in brain, thymus and spleen. Significant signals detected in the neurosensory epithelium of inner ear cochlea and saccule, especially in inner and outer hair cells.

The protein resides in the cytoplasm. Its subcellular location is the cytosol. It is found in the cytoskeleton. The protein localises to the cell membrane. It localises to the cell projection. The protein resides in the cilium. Its subcellular location is the nucleus speckle. It is found in the nucleus. The protein localises to the cajal body. It localises to the microtubule organizing center. The protein resides in the centrosome. Its subcellular location is the photoreceptor inner segment. Plays a role in pre-mRNA splicing by regulating the release and transfer of U4/U6.U5 tri-small nuclear ribonucleoprotein (tri-snRNP) complexes from their assembly site in Cajal bodies to nuclear speckles, thereby contributing to the assembly of the pre-catalytic spliceosome on target pre-mRNAs. May also participate in recycling of snRNPs back to Cajal bodies during splicing. Plays a role in regulating MAGI2-mediated endocytosis. Anchoring/scaffolding protein that is a part of the functional network formed by USH1C, USH1G, CDH23 and MYO7A that mediates mechanotransduction in cochlear hair cells. Required for normal development and maintenance of cochlear hair cell bundles. Required for normal hearing. This chain is pre-mRNA splicing regulator USH1G (Ush1g), found in Mus musculus (Mouse).